Here is a 201-residue protein sequence, read N- to C-terminus: Large ribosomal subunit protein bL25 (201 aa).

The tract at residues 179 to 201 (VSITAPRVEAEKTEEEEPESTEE) is disordered. Residues 190–201 (KTEEEEPESTEE) are compositionally biased toward acidic residues.

The protein belongs to the bacterial ribosomal protein bL25 family. CTC subfamily. As to quaternary structure, part of the 50S ribosomal subunit; part of the 5S rRNA/L5/L18/L25 subcomplex. Contacts the 5S rRNA. Binds to the 5S rRNA independently of L5 and L18.

In terms of biological role, this is one of the proteins that binds to the 5S RNA in the ribosome where it forms part of the central protuberance. The polypeptide is Large ribosomal subunit protein bL25 (Prosthecochloris aestuarii (strain DSM 271 / SK 413)).